A 332-amino-acid polypeptide reads, in one-letter code: Malate dehydrogenase (332 aa).

15-21 contacts NAD(+); it reads GAAGHIG. Substrate is bound by residues Arg96 and Arg102. Residues Asn109 and 133–135 each bind NAD(+); that span reads VGN. Residues Asn135 and Arg166 each contribute to the substrate site. His191 functions as the Proton acceptor in the catalytic mechanism.

This sequence belongs to the LDH/MDH superfamily. MDH type 2 family.

The catalysed reaction is (S)-malate + NAD(+) = oxaloacetate + NADH + H(+). Functionally, catalyzes the reversible oxidation of malate to oxaloacetate. The sequence is that of Malate dehydrogenase from Mycolicibacterium vanbaalenii (strain DSM 7251 / JCM 13017 / BCRC 16820 / KCTC 9966 / NRRL B-24157 / PYR-1) (Mycobacterium vanbaalenii).